The following is a 1151-amino-acid chain: Ankyrin and IPT/TIG repeat-containing protein C26H5.05 (1151 aa).

3 disordered regions span residues 77-104, 452-511, and 516-535; these read NLPS…AECL, KSRN…ENSR, and QLSA…KSVE. Positions 87–98 are enriched in polar residues; the sequence is SHASSPNLSNSQ. The span at 452 to 463 shows a compositional bias: basic and acidic residues; the sequence is KSRNLTKSEKTG. Polar residues-rich tracts occupy residues 464–496 and 517–532; these read KSNS…SDNP and LSAS…STLK. Residues 658 to 739 enclose the IPT/TIG domain; sequence PLISRIIPNK…SSEAPVMFTY (82 aa). 2 ANK repeats span residues 861 to 890 and 894 to 923; these read SGRS…DVNK and LGYT…KPDV. Residues 1041 to 1067 are disordered; sequence PPPYSEFADDTTAQAGSSKRDSAISED. The segment covering 1058 to 1067 has biased composition (basic and acidic residues); that stretch reads SKRDSAISED. Residues 1113-1133 traverse the membrane as a helical segment; the sequence is MDFMLFSFWLPALLLLSIFGL.

Its subcellular location is the vacuole membrane. The protein is Ankyrin and IPT/TIG repeat-containing protein C26H5.05 of Schizosaccharomyces pombe (strain 972 / ATCC 24843) (Fission yeast).